Consider the following 73-residue polypeptide: Mu-conotoxin SIIIA (73 aa).

The first 20 residues, 1–20 (MMSKLGVLLTVCPLLFPLTA), serve as a signal peptide directing secretion. The disordered stretch occupies residues 20–40 (ALPPDGDQPADRPAERMQDDI). A propeptide spanning residues 21–49 (LPPDGDQPADRPAERMQDDISSDEHPLFD) is cleaved from the precursor. Basic and acidic residues predominate over residues 28–40 (PADRPAERMQDDI). Gln52 is modified (pyrrolidone carboxylic acid). 3 cysteine pairs are disulfide-bonded: Cys54–Cys64, Cys55–Cys70, and Cys59–Cys71. A Cysteine amide modification is found at Cys71.

The protein belongs to the conotoxin M superfamily. In terms of tissue distribution, expressed by the venom duct.

The protein localises to the secreted. Mu-conotoxins block voltage-gated sodium channels (Nav). This toxin moderately blocks rNav1.1/SCN1A, rNav1.2/SCN2A, rNav1.3/SCN3A, rNav1.4/SCN4A, and mNav1.6/SCN8A. This Conus striatus (Striated cone) protein is Mu-conotoxin SIIIA.